Reading from the N-terminus, the 100-residue chain is uncharacterized protein (100 aa).

Basic and acidic residues predominate over residues 65-91 (DDRERHLSATGERRREQGFGTSRRKDP). The disordered stretch occupies residues 65–100 (DDRERHLSATGERRREQGFGTSRRKDPSLYNWSDVK).

The protein belongs to the chlamydial CPn_0121/CT_031/TC_0300 family.

This is an uncharacterized protein from Chlamydia trachomatis serovar D (strain ATCC VR-885 / DSM 19411 / UW-3/Cx).